Reading from the N-terminus, the 341-residue chain is Ribulose-5-phosphate reductase 2 (341 aa).

Cys38, His64, Glu65, and Glu144 together coordinate Zn(2+).

The protein belongs to the zinc-containing alcohol dehydrogenase family. In terms of assembly, heterodimer together with TarI. Requires Zn(2+) as cofactor.

The enzyme catalyses D-ribitol 5-phosphate + NADP(+) = D-ribulose 5-phosphate + NADPH + H(+). It participates in cell wall biogenesis; poly(ribitol phosphate) teichoic acid biosynthesis. Functionally, catalyzes the NADPH dependent reduction of D-ribulose 5-phosphate to D-ribitol 5-phosphate. The protein is Ribulose-5-phosphate reductase 2 of Staphylococcus aureus (strain NCTC 8325 / PS 47).